Here is a 579-residue protein sequence, read N- to C-terminus: Mitogen-activated protein kinase kinase kinase 7 (579 aa).

The interval M1–Y300 is interaction with MAPK8IP1. The 256-residue stretch at I36–F291 folds into the Protein kinase domain. ATP-binding positions include V42 to V50 and K63. K72 is covalently cross-linked (Glycyl lysine isopeptide (Lys-Gly) (interchain with G-Cter in ubiquitin)). D156 functions as the Proton acceptor in the catalytic mechanism. K158 is covalently cross-linked (Glycyl lysine isopeptide (Lys-Gly) (interchain with G-Cter in ubiquitin)). Phosphothreonine; by autocatalysis is present on residues T184 and T187. S192 carries the phosphoserine; by autocatalysis modification. K209 participates in a covalent cross-link: Glycyl lysine isopeptide (Lys-Gly) (interchain with G-Cter in ubiquitin). 2 disordered regions span residues P301–P339 and K354–D391. Positions D306–I322 are enriched in polar residues. Low complexity-rich tracts occupy residues T323 to N334 and S361 to S375. Residues S367, S389, and S412 each carry the phosphoserine modification. The span at L416–Q425 shows a compositional bias: polar residues. The segment at L416–D466 is disordered. Low complexity predominate over residues V426–R436. Residue S428 is modified to Phosphoserine.

It belongs to the protein kinase superfamily. STE Ser/Thr protein kinase family. MAP kinase kinase kinase subfamily. As to quaternary structure, can form homodimer. Binds both upstream activators and downstream substrates in multimolecular complexes. Interacts with TAB1/MAP3K7IP1, TAB2/MAP3K7IP2 and TAB3/MAP3K7IP3. Identified in the TRIKA2 complex composed of MAP3K7/TAK1, TAB1/MAP3K7IP1 and TAB2/MAP3K7IP2. Interacts with PPM1L and PPM1B/PP2CB. Interaction with PP2A and PPP6C leads to its repressed activity. Interacts with TRAF6 and TAB1/MAP3K7IP1; during IL-1 signaling. Interacts with TAOK1 and TAOK2; interaction with TAOK2 interferes with MAP3K7 interaction with IKKA, thus preventing NF-kappa-B activation. Interacts with DYNC2I2 (via WD domains). Interacts with CYLD and RBCK1. Interacts with TGFBR1; induces MAP3K7/TAK1 activation by TRAF6. Interacts with MAPK8IP1 and SMAD6. Interacts with isoform 1 of VRK2. Interacts with DAB2; the interaction is induced by TGF-beta stimulation and may mediate TGF-beta stimulated JNK activation. Interacts with TRIM5. Part of a complex containing ITCH, NDFIP1 and MAP3K7. Interacts with IFIT5; the interaction synergizes the recruitment of IKK to MAP3K7 and enhances IKK phosphorylation. Interacts with PLEKHM1 (via N- and C-terminus). Found in a complex with SH3RF1, RAC2, MAP2K7/MKK7, MAPK8IP1/JIP1, MAPK8/JNK1 and MAPK9/JNK2. Interacts with SASH1. Interacts with RIPK1. The cofactor is Mg(2+). Post-translationally, association with TAB1/MAP3K7IP1 promotes autophosphorylation at Ser-192 and subsequent activation. Association with TAB2/MAP3K7IP2, itself associated with free unanchored Lys-63 polyubiquitin chain, promotes autophosphorylation and subsequent activation of MAP3K7. Dephosphorylation at Ser-192 by PPM1B/PP2CB and at Thr-187 by PP2A and PPP6C leads to inactivation. 'Lys-48'-linked polyubiquitination at Lys-72 is induced by TNFalpha, and leads to proteasomal degradation. Undergoes 'Lys-48'-linked polyubiquitination catalyzed by ITCH. 'Lys-63'-linked polyubiquitination at Lys-158 by TRIM8 does not lead to proteasomal degradation but contributes to autophosphorylation and activation. Deubiquitinated by CYLD, a protease that selectively cleaves 'Lys-63'-linked ubiquitin chains. Deubiquitinated by USP19; leading to negative regulation of TNF-alpha- and IL-1beta-triggered NF-kappa-B activation.

It localises to the cytoplasm. The protein localises to the cell membrane. The enzyme catalyses L-seryl-[protein] + ATP = O-phospho-L-seryl-[protein] + ADP + H(+). It catalyses the reaction L-threonyl-[protein] + ATP = O-phospho-L-threonyl-[protein] + ADP + H(+). Activated by pro-inflammatory cytokines and in response to physical and chemical stresses, including osmotic stress, oxidative stress, arsenic and ultraviolet light irradiation. Activated by 'Lys-63'-linked polyubiquitination and by autophosphorylation. Association with TAB1/MAP3K7IP1 and TAB2/MAP3K7IP2 promotes activation through autophosphorylation, whereas PPM1B/PP2CB, PP2A and PPP6C dephosphorylation leads to inactivation. Ceramides are also able to activate MAP3K7/TAK1. Serine/threonine kinase which acts as an essential component of the MAP kinase signal transduction pathway. Plays an important role in the cascades of cellular responses evoked by changes in the environment. Mediates signal transduction of TRAF6, various cytokines including interleukin-1 (IL-1), transforming growth factor-beta (TGFB), TGFB-related factors like BMP2 and BMP4, toll-like receptors (TLR), tumor necrosis factor receptor CD40 and B-cell receptor (BCR). Once activated, acts as an upstream activator of the MKK/JNK signal transduction cascade and the p38 MAPK signal transduction cascade through the phosphorylation and activation of several MAP kinase kinases like MAP2K1/MEK1, MAP2K3/MKK3, MAP2K6/MKK6 and MAP2K7/MKK7. These MAP2Ks in turn activate p38 MAPKs and c-jun N-terminal kinases (JNKs); both p38 MAPK and JNK pathways control the transcription factors activator protein-1 (AP-1). Independently of MAP2Ks and p38 MAPKs, acts as a key activator of NF-kappa-B by promoting activation of the I-kappa-B-kinase (IKK) core complex. Mechanistically, recruited to polyubiquitin chains of RIPK2 and IKBKG/NEMO via TAB2/MAP3K7IP2 and TAB3/MAP3K7IP3, and catalyzes phosphorylation and activation of IKBKB/IKKB component of the IKK complex, leading to NF-kappa-B activation. In osmotic stress signaling, plays a major role in the activation of MAPK8/JNK1, but not that of NF-kappa-B. Promotes TRIM5 capsid-specific restriction activity. Phosphorylates RIPK1 at 'Ser-321' which positively regulates RIPK1 interaction with RIPK3 to promote necroptosis but negatively regulates RIPK1 kinase activity and its interaction with FADD to mediate apoptosis. Phosphorylates STING1 in response to cGAMP-activation, promoting association between STEEP1 and STING1 and STING1 translocation to COPII vesicles. This chain is Mitogen-activated protein kinase kinase kinase 7 (MAP3K7), found in Bos taurus (Bovine).